The chain runs to 63 residues: Antimicrobial peptide 2 (63 aa).

A signal peptide spans 1–27 (MAKVPIAFLKFVIVLILFIAMSGMIEA). 3 disulfide bridges follow: Cys-28–Cys-45, Cys-35–Cys-49, and Cys-44–Cys-60.

The protein belongs to the AMP family. In terms of assembly, homodimer. In terms of tissue distribution, seed specific.

It is found in the secreted. Its function is as follows. Possesses antifungal activity and is also active on two tested Gram-positive bacteria but is non-toxic for Gram-negative bacteria and cultured human cells. The polypeptide is Antimicrobial peptide 2 (AMP2) (Mirabilis jalapa (Garden four-o'clock)).